Reading from the N-terminus, the 87-residue chain is uncharacterized protein (87 aa).

An N-terminal signal peptide occupies residues 1-19; it reads MLVLLVAVLVTAVYAFVHA. The helical transmembrane segment at 39-59 threads the bilayer; it reads LVILGAAVALASILYPVLGVL.

To M.leprae ML2453.

Its subcellular location is the membrane. This is an uncharacterized protein from Mycobacterium bovis (strain ATCC BAA-935 / AF2122/97).